The chain runs to 38 residues: MKVRASVKPMCKDCKIIKRKGAVRVICKTSPKHKQRQG.

It belongs to the bacterial ribosomal protein bL36 family.

In Mycoplasma mobile (strain ATCC 43663 / 163K / NCTC 11711) (Mesomycoplasma mobile), this protein is Large ribosomal subunit protein bL36.